A 156-amino-acid chain; its full sequence is Small ribosomal subunit protein uS7 (156 aa).

Belongs to the universal ribosomal protein uS7 family. As to quaternary structure, part of the 30S ribosomal subunit. Contacts proteins S9 and S11.

Functionally, one of the primary rRNA binding proteins, it binds directly to 16S rRNA where it nucleates assembly of the head domain of the 30S subunit. Is located at the subunit interface close to the decoding center, probably blocks exit of the E-site tRNA. The chain is Small ribosomal subunit protein uS7 from Bacillus mycoides (strain KBAB4) (Bacillus weihenstephanensis).